Consider the following 940-residue polypeptide: Translation initiation factor IF-2 (940 aa).

2 disordered regions span residues 48 to 264 (ESFG…VESK) and 278 to 351 (QVAE…TERK). Basic and acidic residues-rich tracts occupy residues 65–95 (SKPEKVDETPKVETAKVEKAKETQPVVKEEV), 112–125 (FKAEREARAKEQAA), 155–206 (NNER…REAA), 232–258 (RTSEERFRQAQEAKKQPKKPKEIKFEE), and 292–301 (ARPDKKRDFN). The span at 314 to 332 (NRNSQNQVRNQRTSNWNNN) shows a compositional bias: low complexity. A tr-type G domain is found at 442-609 (ERPPVVTIMG…TVLLVAEIQE (168 aa)). The interval 451–458 (GHVDHGKT) is G1. 451–458 (GHVDHGKT) is a GTP binding site. The interval 476–480 (GITQH) is G2. The segment at 497 to 500 (DTPG) is G3. GTP-binding positions include 497–501 (DTPGH) and 551–554 (NKID). Residues 551–554 (NKID) are G4. A G5 region spans residues 587–589 (SAK).

Belongs to the TRAFAC class translation factor GTPase superfamily. Classic translation factor GTPase family. IF-2 subfamily.

The protein resides in the cytoplasm. Its function is as follows. One of the essential components for the initiation of protein synthesis. Protects formylmethionyl-tRNA from spontaneous hydrolysis and promotes its binding to the 30S ribosomal subunits. Also involved in the hydrolysis of GTP during the formation of the 70S ribosomal complex. In Streptococcus suis (strain 98HAH33), this protein is Translation initiation factor IF-2.